The sequence spans 151 residues: Internal scaffolding protein VP3 (151 aa).

Positions 120-151 (VETPQQAPQSTTNQTTTKPAPASGEPTPVPTP) are disordered. Positions 122–137 (TPQQAPQSTTNQTTTK) are enriched in polar residues.

This sequence belongs to the microvidae B protein family.

It localises to the host cytoplasm. Functionally, participates in the assembly of the viral procapsid in the cytoplasm. Internal scaffolding protein VP3 is released from the procapsid upon genome packaging, possibly through affinity displacement by the protein VP8, or by proteolysis. The chain is Internal scaffolding protein VP3 from Bdellovibrio bacteriovorus (Bacteriophage phiMH2K).